The chain runs to 692 residues: Tripartite terminase subunit 1 (692 aa).

The C3H1-type zinc-finger motif lies at 190 to 218 (CYLCYEELQMTPNNGSSVQKRLNGVLCEH). An ATP-binding site is contributed by 634–641 (YNELYGQR).

This sequence belongs to the herpesviridae TRM1 protein family. In terms of assembly, associates with TRM2 and TRM3 to form the tripartite terminase complex. Interacts with portal protein.

It is found in the host nucleus. Component of the molecular motor that translocates viral genomic DNA in empty capsid during DNA packaging. Forms a tripartite terminase complex together with TRM2 and TRM3 in the host cytoplasm. Once the complex reaches the host nucleus, it interacts with the capsid portal vertex. This portal forms a ring in which genomic DNA is translocated into the capsid. TRM1 carries an endonuclease activity that plays an important role for the cleavage of concatemeric viral DNA into unit length genomes. In Elephas maximus (Indian elephant), this protein is Tripartite terminase subunit 1.